The primary structure comprises 125 residues: Fluoride-specific ion channel FluC (125 aa).

4 helical membrane-spanning segments follow: residues 2–22, 35–55, 68–88, and 98–118; these read WLSI…RTGF, LGTL…LAFF, LIIT…AEVV, and WALG…LLGI. Na(+) is bound by residues G75 and T78.

The protein belongs to the fluoride channel Fluc/FEX (TC 1.A.43) family.

It localises to the cell inner membrane. The enzyme catalyses fluoride(in) = fluoride(out). Its activity is regulated as follows. Na(+) is not transported, but it plays an essential structural role and its presence is essential for fluoride channel function. Fluoride-specific ion channel. Important for reducing fluoride concentration in the cell, thus reducing its toxicity. The sequence is that of Fluoride-specific ion channel FluC from Polynucleobacter asymbioticus (strain DSM 18221 / CIP 109841 / QLW-P1DMWA-1) (Polynucleobacter necessarius subsp. asymbioticus).